A 325-amino-acid chain; its full sequence is Xylosidase/arabinosidase (325 aa).

Catalysis depends on aspartate 16, which acts as the Proton acceptor. Glutamate 224 (proton donor) is an active-site residue.

Belongs to the glycosyl hydrolase 43 family.

It catalyses the reaction Hydrolysis of (1-&gt;4)-beta-D-xylans, to remove successive D-xylose residues from the non-reducing termini.. The enzyme catalyses Hydrolysis of terminal non-reducing alpha-L-arabinofuranoside residues in alpha-L-arabinosides.. The polypeptide is Xylosidase/arabinosidase (xsa) (Bacteroides ovatus).